Here is an 83-residue protein sequence, read N- to C-terminus: Cell division topological specificity factor (83 aa).

It belongs to the MinE family.

In terms of biological role, prevents the cell division inhibition by proteins MinC and MinD at internal division sites while permitting inhibition at polar sites. This ensures cell division at the proper site by restricting the formation of a division septum at the midpoint of the long axis of the cell. The chain is Cell division topological specificity factor from Buchnera aphidicola subsp. Schizaphis graminum (strain Sg).